A 557-amino-acid polypeptide reads, in one-letter code: Fatty acyl-CoA hydrolase precursor, medium chain (557 aa).

Positions 1–25 are cleaved as a signal peptide; the sequence is MATEKNTLLSLILTAGITALVATGQ. An intrachain disulfide couples Cys-93 to Cys-122. Ser-227 functions as the Acyl-ester intermediate in the catalytic mechanism. Active-site charge relay system residues include Glu-345 and His-460. Residue Asn-476 is glycosylated (N-linked (GlcNAc...) asparagine).

Belongs to the type-B carboxylesterase/lipase family. Highest levels in uropygial gland, much lower in liver and kidney.

Its function is as follows. Fatty acid biosynthesis chain termination and release of the free fatty acid product is achieved by hydrolysis of the thio ester by a thioesterase. This thioesterase may be associated with peroxisome proliferation and may play a role in the production of 3-hydroxy fatty acid diester pheromones. In Anas platyrhynchos (Mallard), this protein is Fatty acyl-CoA hydrolase precursor, medium chain.